The primary structure comprises 248 residues: Anamorsin homolog (248 aa).

The segment at 4-129 (FKGLQKSLYI…ETGSSARLSF (126 aa)) is N-terminal SAM-like domain. The interval 130–161 (AKKNASAVNVWKISGDDEELIDEEELLDEEDK) is linker. Residues Cys172, Cys181, Cys184, and Cys186 each coordinate [2Fe-2S] cluster. Residues 172-186 (CSTTGKRKACKNCSC) are fe-S binding site A. The [4Fe-4S] cluster site is built by Cys209, Cys212, Cys220, and Cys223. Short sequence motifs (cx2C motif) lie at residues 209–212 (CGNC) and 220–223 (CSTC). A fe-S binding site B region spans residues 209 to 223 (CGNCYLGDAFRCSTC).

Belongs to the anamorsin family. In terms of assembly, monomer. Requires [2Fe-2S] cluster as cofactor. [4Fe-4S] cluster is required as a cofactor.

It is found in the cytoplasm. It localises to the mitochondrion intermembrane space. Its function is as follows. Component of the cytosolic iron-sulfur (Fe-S) protein assembly (CIA) machinery. Required for the maturation of extramitochondrial Fe-S proteins. Part of an electron transfer chain functioning in an early step of cytosolic Fe-S biogenesis, facilitating the de novo assembly of a [4Fe-4S] cluster on the cytosolic Fe-S scaffold complex. Electrons are transferred from NADPH via a FAD- and FMN-containing diflavin oxidoreductase. Together with the diflavin oxidoreductase, also required for the assembly of the diferric tyrosyl radical cofactor of ribonucleotide reductase (RNR), probably by providing electrons for reduction during radical cofactor maturation in the catalytic small subunit. In Drosophila yakuba (Fruit fly), this protein is Anamorsin homolog.